The chain runs to 112 residues: Large ribosomal subunit protein mL53 (112 aa).

The protein belongs to the mitochondrion-specific ribosomal protein mL53 family. In terms of assembly, component of the mitochondrial ribosome large subunit (39S) which comprises a 16S rRNA and about 50 distinct proteins.

It is found in the mitochondrion. The protein is Large ribosomal subunit protein mL53 (MRPL53) of Bos taurus (Bovine).